A 248-amino-acid polypeptide reads, in one-letter code: Methionine aminopeptidase (248 aa).

His-77 serves as a coordination point for substrate. Asp-94, Asp-105, and His-169 together coordinate a divalent metal cation. Residue His-176 participates in substrate binding. Glu-202 and Glu-233 together coordinate a divalent metal cation.

It belongs to the peptidase M24A family. Methionine aminopeptidase type 1 subfamily. In terms of assembly, monomer. Co(2+) serves as cofactor. The cofactor is Zn(2+). Requires Mn(2+) as cofactor. Fe(2+) is required as a cofactor.

It catalyses the reaction Release of N-terminal amino acids, preferentially methionine, from peptides and arylamides.. Functionally, removes the N-terminal methionine from nascent proteins. The N-terminal methionine is often cleaved when the second residue in the primary sequence is small and uncharged (Met-Ala-, Cys, Gly, Pro, Ser, Thr, or Val). Requires deformylation of the N(alpha)-formylated initiator methionine before it can be hydrolyzed. This chain is Methionine aminopeptidase, found in Mycoplasma genitalium (strain ATCC 33530 / DSM 19775 / NCTC 10195 / G37) (Mycoplasmoides genitalium).